Reading from the N-terminus, the 371-residue chain is Chaperone protein DnaJ (371 aa).

The 65-residue stretch at 5–69 (DYYEVLGLSK…QKRAQYDQFG (65 aa)) folds into the J domain. The CR-type zinc finger occupies 133–215 (GKELNVEIPV…CHGSGKVRKR (83 aa)). Positions 146, 149, 163, 166, 189, 192, 203, and 206 each coordinate Zn(2+). CXXCXGXG motif repeat units follow at residues 146 to 153 (CDTCKGSG), 163 to 170 (CKHCSGSG), 189 to 196 (CGHCSGTG), and 203 to 210 (CTTCHGSG).

The protein belongs to the DnaJ family. Homodimer. Zn(2+) serves as cofactor.

The protein localises to the cytoplasm. Its function is as follows. Participates actively in the response to hyperosmotic and heat shock by preventing the aggregation of stress-denatured proteins and by disaggregating proteins, also in an autonomous, DnaK-independent fashion. Unfolded proteins bind initially to DnaJ; upon interaction with the DnaJ-bound protein, DnaK hydrolyzes its bound ATP, resulting in the formation of a stable complex. GrpE releases ADP from DnaK; ATP binding to DnaK triggers the release of the substrate protein, thus completing the reaction cycle. Several rounds of ATP-dependent interactions between DnaJ, DnaK and GrpE are required for fully efficient folding. Also involved, together with DnaK and GrpE, in the DNA replication of plasmids through activation of initiation proteins. The polypeptide is Chaperone protein DnaJ (Bacillus cereus (strain G9842)).